The following is a 170-amino-acid chain: RNA pyrophosphohydrolase (170 aa).

One can recognise a Nudix hydrolase domain in the interval 9–162 (PYRPCAGIMV…KRAVYEKVVA (154 aa)). Positions 50–71 (GGIDDGERPLTAAIRELYEETG) match the Nudix box motif.

Belongs to the Nudix hydrolase family. RppH subfamily. The cofactor is a divalent metal cation.

In terms of biological role, accelerates the degradation of transcripts by removing pyrophosphate from the 5'-end of triphosphorylated RNA, leading to a more labile monophosphorylated state that can stimulate subsequent ribonuclease cleavage. The chain is RNA pyrophosphohydrolase from Agrobacterium fabrum (strain C58 / ATCC 33970) (Agrobacterium tumefaciens (strain C58)).